A 249-amino-acid polypeptide reads, in one-letter code: Diphthine synthase (249 aa).

S-adenosyl-L-methionine-binding positions include Asp-83, Leu-86, 111-112 (SI), Leu-163, and Leu-205.

The protein belongs to the diphthine synthase family. As to quaternary structure, homodimer.

It catalyses the reaction 2-[(3S)-amino-3-carboxypropyl]-L-histidyl-[translation elongation factor 2] + 3 S-adenosyl-L-methionine = diphthine-[translation elongation factor 2] + 3 S-adenosyl-L-homocysteine + 3 H(+). Its pathway is protein modification; peptidyl-diphthamide biosynthesis. Its function is as follows. S-adenosyl-L-methionine-dependent methyltransferase that catalyzes the trimethylation of the amino group of the modified target histidine residue in translation elongation factor 2 (EF-2), to form an intermediate called diphthine. The three successive methylation reactions represent the second step of diphthamide biosynthesis. The sequence is that of Diphthine synthase from Pyrobaculum islandicum (strain DSM 4184 / JCM 9189 / GEO3).